The chain runs to 1325 residues: NHS-like protein 3 (1325 aa).

A coiled-coil region spans residues 53-85 (LEDLHTEAQEGLKILQQEEEDTSSKERNESLEN). Disordered regions lie at residues 68–92 (QQEE…SGHS), 111–131 (QGST…KRRS), 291–348 (CSAS…KGKC), 368–570 (MSVS…AKTS), 595–614 (QTNT…TTVK), 829–891 (EVNG…MEES), 935–981 (LLST…VSEF), 1084–1138 (VGED…SSAV), 1243–1272 (GTKK…ENAT), and 1293–1313 (SDQV…EQAS). Low complexity predominate over residues 296–334 (ASKGSMASASPSSSRSGSGTNQAPPTTSPSRSNSQSSET). The segment covering 335–344 (IVSNSSTISS) has biased composition (polar residues). Residues 369–378 (SVSSSSSWKS) are compositionally biased toward low complexity. Positions 400-412 (VRNSHSFSRSLSV) are enriched in polar residues. A compositionally biased stretch (basic and acidic residues) spans 428–447 (LHHENMQRQREQGDIQDPKD). A compositionally biased stretch (polar residues) spans 450 to 460 (PNNNEQTNRDI). Basic and acidic residues predominate over residues 515–524 (KTRECGENFD). The span at 528–541 (SPSSGYSSQSGTPT) shows a compositional bias: low complexity. Residues 834–850 (SPPPSPPPEHHPPPPPI) show a composition bias toward pro residues. 2 stretches are compositionally biased toward polar residues: residues 935–948 (LLST…SSPE) and 1088–1100 (QVNN…TEPT). Residues 1124-1138 (KSNSPAKSSSASSAV) show a composition bias toward low complexity. Polar residues predominate over residues 1302–1311 (RAQSLGNQEQ).

In terms of biological role, able to directly activate the TNF-NFkappaB signaling pathway. The chain is NHS-like protein 3 (nhsl3) from Danio rerio (Zebrafish).